Here is a 503-residue protein sequence, read N- to C-terminus: ATP synthase subunit alpha (503 aa).

An ATP-binding site is contributed by Gly170–Thr177.

Belongs to the ATPase alpha/beta chains family. F-type ATPases have 2 components, CF(1) - the catalytic core - and CF(0) - the membrane proton channel. CF(1) has five subunits: alpha(3), beta(3), gamma(1), delta(1), epsilon(1). CF(0) has three main subunits: a(1), b(2) and c(9-12). The alpha and beta chains form an alternating ring which encloses part of the gamma chain. CF(1) is attached to CF(0) by a central stalk formed by the gamma and epsilon chains, while a peripheral stalk is formed by the delta and b chains.

It localises to the cell inner membrane. The enzyme catalyses ATP + H2O + 4 H(+)(in) = ADP + phosphate + 5 H(+)(out). Produces ATP from ADP in the presence of a proton gradient across the membrane. The alpha chain is a regulatory subunit. The chain is ATP synthase subunit alpha from Thermotoga neapolitana (strain ATCC 49049 / DSM 4359 / NBRC 107923 / NS-E).